The following is a 756-amino-acid chain: Protein O-mannosyl-transferase 2 (756 aa).

7 consecutive transmembrane segments (helical) span residues 64-84 (AHVPVFILALVIVLSVSTRFY), 110-130 (TFFFDVHPPLGKMLIGLAGYL), 156-176 (AFCAALGSCLPPFAFLVVLEL), 179-199 (SSTAALIAASLLIFDTGCITL), 203-223 (ILLDPILMFFIMGSVLCMVKF), 245-265 (CLSGSLGVKFVGLFVILLVGI), and 293-313 (VFGLIMLPLFLYTTIFAIHFI). 3 MIR domains span residues 344 to 400 (PEYL…VKRL), 410 to 466 (PELV…VEVC), and 471 to 528 (GDPV…IEDH). The next 4 membrane-spanning stretches (helical) occupy residues 602–622 (PVIWWLNLLSLALFVILLTVA), 643–663 (LMEGGGMLFLGWLLHYLPFYI), 672–692 (HYFPAMMFSSMLTGITLDILL), and 713–733 (SVLLLGFIYSFYLFHPLSYGM).

The protein belongs to the glycosyltransferase 39 family. As to expression, widely expressed. Has particularly strong expression in ovary, testis, liver, brain, muscle, heart and eye.

The protein resides in the endoplasmic reticulum membrane. The catalysed reaction is a di-trans,poly-cis-dolichyl beta-D-mannosyl phosphate + L-seryl-[protein] = 3-O-(alpha-D-mannosyl)-L-seryl-[protein] + a di-trans,poly-cis-dolichyl phosphate + H(+). It carries out the reaction a di-trans,poly-cis-dolichyl beta-D-mannosyl phosphate + L-threonyl-[protein] = 3-O-(alpha-D-mannosyl)-L-threonyl-[protein] + a di-trans,poly-cis-dolichyl phosphate + H(+). It participates in protein modification; protein glycosylation. Functionally, transfers mannosyl residues to the hydroxyl group of serine or threonine residues. Coexpression of both POMT1 and POMT2 is necessary for enzyme activity, expression of either POMT1 or POMT2 alone is insufficient. This Danio rerio (Zebrafish) protein is Protein O-mannosyl-transferase 2.